The primary structure comprises 574 residues: Glutamate--tRNA ligase (574 aa).

Residues 109-119 (PNPDFVIHMGN) carry the 'HIGH' region motif.

It belongs to the class-I aminoacyl-tRNA synthetase family. Glutamate--tRNA ligase type 2 subfamily.

The protein localises to the cytoplasm. It catalyses the reaction tRNA(Glu) + L-glutamate + ATP = L-glutamyl-tRNA(Glu) + AMP + diphosphate. Functionally, catalyzes the attachment of glutamate to tRNA(Glu) in a two-step reaction: glutamate is first activated by ATP to form Glu-AMP and then transferred to the acceptor end of tRNA(Glu). The polypeptide is Glutamate--tRNA ligase (Aeropyrum pernix (strain ATCC 700893 / DSM 11879 / JCM 9820 / NBRC 100138 / K1)).